A 446-amino-acid polypeptide reads, in one-letter code: MSGYEVNFDGLVGLTHHYAGLSFGNEASTQHQNSVSNPKLAAKQGLLKMKALADLGFQQGVLPPQERPHVPMLRKLGFSGSDESVLAQAMQQSPRLLSALSSASCMWTANAATVSPSADSADGKVHFTAANLNNKFHRAIEAETTSGVLRAMFNDPRHFAHHEALPQVALFGDEGAANHNRLGGDYGKRSVQMFVYGRQEFGGEIAPTRYPARQTREAGEAIARLHQLDEQHTVFVQQNPEVIDQGVFHNDVIAVSNQNVLFHHQQAFYRQQQALDEVRRKMATLDSELVAIEVPTTRVSVADAVATYLFNSQILTKPNGKMMIVVPEESRQHSGVWSYLSEMVASGGPIDEIKVFDLRESMRNGGGPACLRLRVALNEQELRAVNPRVMMNDSLFITLNEWVDRYYRDRLTQNDLADPQLLREGREALDSLTTILGLGSVYPFQQ.

Substrate-binding positions include Ala19–Ser28, Asn110, and His137–Arg138. The active site involves Glu174. A substrate-binding site is contributed by Arg213. His249 is a catalytic residue. Substrate is bound by residues Asp251 and Asn364. Cys370 functions as the Nucleophile in the catalytic mechanism.

Belongs to the succinylarginine dihydrolase family. Homodimer.

It carries out the reaction N(2)-succinyl-L-arginine + 2 H2O + 2 H(+) = N(2)-succinyl-L-ornithine + 2 NH4(+) + CO2. The protein operates within amino-acid degradation; L-arginine degradation via AST pathway; L-glutamate and succinate from L-arginine: step 2/5. Functionally, catalyzes the hydrolysis of N(2)-succinylarginine into N(2)-succinylornithine, ammonia and CO(2). The polypeptide is N-succinylarginine dihydrolase (Serratia proteamaculans (strain 568)).